An 83-amino-acid polypeptide reads, in one-letter code: Probable insulin-like peptide alpha-type 2 (83 aa).

An N-terminal signal peptide occupies residues 1-21 (MHTTTILICFFIFLVQVSTMD). 3 disulfide bridges follow: cysteine 32–cysteine 66, cysteine 44–cysteine 79, and cysteine 54–cysteine 80.

Belongs to the insulin family.

It is found in the secreted. The polypeptide is Probable insulin-like peptide alpha-type 2 (ins-22) (Caenorhabditis elegans).